The chain runs to 466 residues: Fumarate hydratase class II (466 aa).

Residues 99–101, 129–132, 139–141, and Thr187 contribute to the substrate site; these read SGT, HPND, and SSN. His188 acts as the Proton donor/acceptor in catalysis. The active site involves Ser318. Residues Ser319 and 324–326 contribute to the substrate site; that span reads KVN.

It belongs to the class-II fumarase/aspartase family. Fumarase subfamily. In terms of assembly, homotetramer.

The protein localises to the cytoplasm. It carries out the reaction (S)-malate = fumarate + H2O. It participates in carbohydrate metabolism; tricarboxylic acid cycle; (S)-malate from fumarate: step 1/1. Its function is as follows. Involved in the TCA cycle. Catalyzes the stereospecific interconversion of fumarate to L-malate. This Thermus aquaticus protein is Fumarate hydratase class II.